The primary structure comprises 410 residues: MSSDPKISITSFLECLSEIEEEFLRDKEKNPPVLVSKLQELQQKTPNNIANLDHDPETIQKIHQTTHRINVAVKAFICIDQTFVSLRSDAVEDASRALKKANASSPVVGCRELSEDLPAYHMRKHFLHTLENPYPTQEEKETLVRLTNESTARVGQSIVNRPPLEVHQLTLWFINARRRSGWSHILKKFAREDRSRMKHLVRAKLSSSNQSTPPSPTSEYPSNNLDDFLSDNLGRPLTPADKQQFEDDWASMISWIKYGVKEKVGDWVYDLCAASKKTPKPGMPRPVTTVAKRQPARKTKPAAKPKSRTANPRASTTPSIDSTLDSSKLESTPELSMCSTADTSFSTFGSSLSMSHYDPFQYGNDILQSPTFKARGNRKVKALPKRAGKQQPDEVENGKIPFLCLSVAFV.

Residues 1–110 form a variable domain between B alleles region; sequence MSSDPKISIT…ANASSPVVGC (110 aa). Residues 107–184 constitute a DNA-binding region (homeobox; TALE-type); sequence VVGCRELSED…NARRRSGWSH (78 aa). Residues 111 to 410 are highly conserved between B alleles; it reads RELSEDLPAY…PFLCLSVAFV (300 aa). Disordered regions lie at residues 202 to 241, 278 to 335, and 375 to 394; these read RAKLSSSNQSTPPSPTSEYPSNNLDDFLSDNLGRPLTPAD, TPKP…TPEL, and RGNRKVKALPKRAGKQQPDE. Low complexity predominate over residues 206–222; that stretch reads SSSNQSTPPSPTSEYPS. Positions 276–308 match the Nuclear localization signal motif; that stretch reads KKTPKPGMPRPVTTVAKRQPARKTKPAAKPKSR. Basic residues predominate over residues 294–307; it reads QPARKTKPAAKPKS. The span at 312-335 shows a compositional bias: polar residues; it reads PRASTTPSIDSTLDSSKLESTPEL. The segment at 333 to 410 is not essential for B4 function; that stretch reads PELSMCSTAD…PFLCLSVAFV (78 aa). Over residues 375 to 388 the composition is skewed to basic residues; it reads RGNRKVKALPKRAG.

This sequence belongs to the TALE/M-ATYP homeobox family.

It localises to the nucleus. Functionally, the B locus has at least 25 alleles, and any combination of two different B alleles yields a multimeric regulatory protein, that activates genes responsible for the pathogenicity and for the sexual development of the fungus within the corn plant. This chain is Mating-type locus allele B4 protein, found in Mycosarcoma maydis (Corn smut fungus).